A 73-amino-acid polypeptide reads, in one-letter code: Large ribosomal subunit protein uL24 (73 aa).

The segment covering 51–65 (DDNPKGGFIHKEKPM) has biased composition (basic and acidic residues). Positions 51 to 73 (DDNPKGGFIHKEKPMHISNVKKA) are disordered.

This sequence belongs to the universal ribosomal protein uL24 family. Part of the 50S ribosomal subunit.

Its function is as follows. One of two assembly initiator proteins, it binds directly to the 5'-end of the 23S rRNA, where it nucleates assembly of the 50S subunit. Functionally, one of the proteins that surrounds the polypeptide exit tunnel on the outside of the subunit. The polypeptide is Large ribosomal subunit protein uL24 (Helicobacter acinonychis (strain Sheeba)).